The sequence spans 777 residues: Hepatocyte growth factor-regulated tyrosine kinase substrate (777 aa).

The 129-residue stretch at 15-143 folds into the VHS domain; sequence ATSQLLLETD…IMKVEGHVFP (129 aa). The FYVE-type zinc finger occupies 160-220; the sequence is WVDAEECHRC…VCEPCFEQLN (61 aa). Residues C166, C169, C182, C185, C190, and C193 each coordinate Zn(2+). K207 carries the post-translational modification N6-acetyllysine. Zn(2+) contacts are provided by C212 and C215. The tract at residues 223-319 is disordered; sequence AEGKAASTTE…SPVNSSAPLA (97 aa). The tract at residues 225-541 is interaction with SNX1; that stretch reads GKAASTTELP…QRLQEQEKER (317 aa). In terms of domain architecture, UIM spans 258-277; the sequence is QEEEELQLALALSQSEAEEK. The segment covering 292 to 311 has biased composition (low complexity); the sequence is AEPTPVASSAPPASSLYSSP. A phosphotyrosine mark is found at Y308, Y329, and Y334. Residues 338 to 370 are disordered; the sequence is KQEEARKSPTPSAPVPLTEPTAQPGEGHAIPAN. Residues 443–541 form an interaction with SNAP25 and TRAK2 region; the sequence is SINTMHPQLL…QRLQEQEKER (99 aa). An interaction with STAM region spans residues 452-570; the sequence is LELLNQLDER…FSLPYAQLQA (119 aa). Residues 478–777 form an interaction with NF2 region; the sequence is ARGALSALRE…GSEAQLISFD (300 aa). An N6-succinyllysine modification is found at K549. Residues 645-658 are compositionally biased toward low complexity; sequence AAAQGPAGPTTSPA. Disordered regions lie at residues 645 to 698 and 712 to 777; these read AAAQ…YMGS and NLMP…ISFD. 2 stretches are compositionally biased toward polar residues: residues 659-698 and 730-739; these read YSSY…YMGS and PYISGQQPVY. The segment covering 753–777 has biased composition (low complexity); the sequence is PPVAQQPPAQGPPAQGSEAQLISFD.

Component of the ESCRT-0 complex composed of STAM or STAM2 and HGS. Part of a complex at least composed of HSG, STAM2 (or probably STAM) and EPS15. Interacts with STAM. Interacts with STAM2. Interacts with EPS15; the interaction is direct, calcium-dependent and inhibited by SNAP25. Identified in a complex with STAM and LITAF. Found in a complex with STAM and E3 ligase ITCH and DTX3L. Interacts with E3 ligase DTX3L; the interaction brings together STAM and HSG, promotes their recruitment to early endosomes and decreases STAM and HGS ubiquitination by ITCH. Interacts with NF2; the interaction is direct. Interacts with ubiquitin; the interaction is direct. Interacts with VPS37C. Interacts with SMAD1, SMAD2 and SMAD3. Interacts with TSG101; the interaction mediates the association with the ESCRT-I complex. Interacts with SNAP25; the interaction is direct and decreases with addition of increasing concentrations of free calcium. Interacts with SNX1; the interaction is direct. Component of a 550 kDa membrane complex at least composed of HGS and SNX1 but excluding EGFR. Interacts with TRAK1. Interacts with TRAK2. Component of the CART complex, at least composed of ACTN4, HGS/HRS, MYO5B and TRIM3. Interacts (via UIM domain) with UBQLN1 (via ubiquitin-like domain). Interacts with ARRDC3. Identified in a complex containing at least ARRDC4, AVPR2 and HGS. Interacts with LAPTM4B; promotes HGS ubiquitination. Post-translationally, phosphorylated on Tyr-334. A minor site of phosphorylation on Tyr-329 is detected. Phosphorylation occurs in response to EGF, IL-2, GM-CSF and HGF. Ubiquitinated by ITCH.

The protein resides in the cytoplasm. Its subcellular location is the early endosome membrane. It localises to the endosome. It is found in the multivesicular body membrane. Functionally, involved in intracellular signal transduction mediated by cytokines and growth factors. When associated with STAM it suppresses DNA signaling upon stimulation by IL-2 and GM-CSF. Could be a direct effector of PI3-kinase in vesicular pathway via early endosomes and may regulate trafficking to early and late endosomes by recruiting clathrin. May concentrate ubiquitinated receptors within clathrin-coated regions. Involved in down-regulation of receptor tyrosine kinase via multivesicular body (MVBs) when complexed with STAM (ESCRT-0 complex). The ESCRT-0 complex binds ubiquitin and acts as a sorting machinery that recognizes ubiquitinated receptors and transfers them to further sequential lysosomal sorting/trafficking processes. May contribute to the efficient recruitment of SMADs to the activin receptor complex. Involved in receptor recycling via its association with the CART complex, a multiprotein complex required for efficient transferrin receptor recycling but not for EGFR degradation. This Bos taurus (Bovine) protein is Hepatocyte growth factor-regulated tyrosine kinase substrate (HGS).